Reading from the N-terminus, the 214-residue chain is ER lumen protein-retaining receptor 3 (214 aa).

Residues 1 to 4 (MNVF) lie on the Lumenal side of the membrane. The chain crosses the membrane as a helical span at residues 5–24 (RISGDVSHLLAIIILLLKMW). At 25–32 (KSKSCAGI) the chain is on the cytoplasmic side. A helical membrane pass occupies residues 33 to 52 (SGKSQLLFALVFTTRYLDLF). The segment at 47–48 (RY) is interaction with the K-D-E-L motif on target proteins. Residues 53 to 58 (TVFISA) lie on the Lumenal side of the membrane. Residues 59–79 (YNTVMKIVFLVCAYVTVYLIY) form a helical membrane-spanning segment. At 80-92 (GKFRKAYDSENDT) the chain is on the cytoplasmic side. The helical transmembrane segment at 93 to 110 (FRLEFLLVPVIGLSFLEN) threads the bilayer. Residues 111–116 (YEFTPL) lie on the Lumenal side of the membrane. The helical transmembrane segment at 117–135 (EILWTFSIYLESVAILPQL) threads the bilayer. Residues 136–149 (FMISKTGEAESITT) are Cytoplasmic-facing. Residues 150 to 168 (HYLFFLGLYRVLYLANWIW) traverse the membrane as a helical segment. The interaction with the K-D-E-L motif on target proteins stretch occupies residues 159-169 (RVLYLANWIWR). At 169 to 178 (RYHTEKFYDQ) the chain is on the lumenal side. The helical transmembrane segment at 179–199 (IAVVSGVVQTIFYFDFFYLYI) threads the bilayer. At 200–214 (TKVLKGKKLSLPMPV) the chain is on the cytoplasmic side. The segment at 204–207 (KGKK) is important for recycling of cargo proteins with the sequence motif K-D-E-L from the Golgi to the endoplasmic reticulum.

It belongs to the ERD2 family.

It localises to the endoplasmic reticulum membrane. The protein localises to the golgi apparatus membrane. It is found in the cytoplasmic vesicle. Its subcellular location is the COPI-coated vesicle membrane. In terms of biological role, receptor for the C-terminal sequence motif K-D-E-L that is present on endoplasmic reticulum resident proteins and that mediates their recycling from the Golgi back to the endoplasmic reticulum. The chain is ER lumen protein-retaining receptor 3 (kdelr3) from Xenopus tropicalis (Western clawed frog).